Reading from the N-terminus, the 78-residue chain is uncharacterized protein (78 aa).

A disordered region spans residues 1-28; that stretch reads MQANHSVSYLYESSTSKRSNGLFSQTQK.

This is an uncharacterized protein from Saccharomyces cerevisiae (strain ATCC 204508 / S288c) (Baker's yeast).